The chain runs to 638 residues: LIM domain kinase 2 (638 aa).

LIM zinc-binding domains are found at residues 12 to 63 and 72 to 124; these read CRGC…CHKD and CHGC…CGKC. A PDZ domain is found at 152–239; the sequence is LISMPATTEC…TLQLLIEHDP (88 aa). A Phosphothreonine modification is found at threonine 210. Residues 257-266 show a composition bias toward polar residues; it reads MQSSGHTLML. Residues 257 to 304 form a disordered region; the sequence is MQSSGHTLMLSTLDAKENQEGTLRRRSLRRSNSISKSPGPSSPKEPLL. Basic and acidic residues predominate over residues 270-279; it reads DAKENQEGTL. Low complexity predominate over residues 286-304; that stretch reads RSNSISKSPGPSSPKEPLL. Residues serine 293 and serine 298 each carry the phosphoserine modification. Positions 331 to 608 constitute a Protein kinase domain; that stretch reads LIHGEVLGKG…DSFEALSLFL (278 aa). ATP contacts are provided by residues 337-345 and lysine 360; that span reads LGKGFFGQA. Aspartate 451 is an active-site residue. Threonine 505 is modified (phosphothreonine; by ROCK1 and CDC42BP).

This sequence belongs to the protein kinase superfamily. TKL Ser/Thr protein kinase family. In terms of assembly, binds ROCK1 and MARF1. Interacts with NISCH. Post-translationally, phosphorylated on serine and/or threonine residues by ROCK1. In terms of tissue distribution, found in various tissues at moderate levels, except for testis, which shows very low expression.

The protein resides in the cytoplasm. It localises to the nucleus. Its subcellular location is the perinuclear region. The protein localises to the cytoskeleton. It is found in the spindle. The protein resides in the microtubule organizing center. It localises to the centrosome. The catalysed reaction is L-seryl-[protein] + ATP = O-phospho-L-seryl-[protein] + ADP + H(+). The enzyme catalyses L-threonyl-[protein] + ATP = O-phospho-L-threonyl-[protein] + ADP + H(+). Its function is as follows. Serine/threonine-protein kinase that plays an essential role in the regulation of actin filament dynamics. Acts downstream of several Rho family GTPase signal transduction pathways. Involved in astral microtubule organization and mitotic spindle orientation during early stages of mitosis by mediating phosphorylation of TPPP. Displays serine/threonine-specific phosphorylation of myelin basic protein and histone (MBP) in vitro. Suppresses ciliogenesis via multiple pathways; phosphorylation of CFL1, directional trafficking of ciliary vesicles to the ciliary base, and by facilitating YAP1 nuclear localization where it acts as a transcriptional corepressor of the TEAD4 target genes AURKA and PLK1. The chain is LIM domain kinase 2 (Limk2) from Rattus norvegicus (Rat).